The sequence spans 273 residues: Dermonecrotic toxin LspaSicTox-alphaIA1ii (273 aa).

Residue H5 is part of the active site. 2 residues coordinate Mg(2+): E25 and D27. The active-site Nucleophile is H41. Cystine bridges form between C45/C51 and C47/C190. D85 lines the Mg(2+) pocket.

Belongs to the arthropod phospholipase D family. Class II subfamily. Requires Mg(2+) as cofactor. As to expression, expressed by the venom gland.

It is found in the secreted. It carries out the reaction an N-(acyl)-sphingosylphosphocholine = an N-(acyl)-sphingosyl-1,3-cyclic phosphate + choline. The enzyme catalyses an N-(acyl)-sphingosylphosphoethanolamine = an N-(acyl)-sphingosyl-1,3-cyclic phosphate + ethanolamine. The catalysed reaction is a 1-acyl-sn-glycero-3-phosphocholine = a 1-acyl-sn-glycero-2,3-cyclic phosphate + choline. It catalyses the reaction a 1-acyl-sn-glycero-3-phosphoethanolamine = a 1-acyl-sn-glycero-2,3-cyclic phosphate + ethanolamine. Dermonecrotic toxins cleave the phosphodiester linkage between the phosphate and headgroup of certain phospholipids (sphingolipid and lysolipid substrates), forming an alcohol (often choline) and a cyclic phosphate. This toxin acts on sphingomyelin (SM). It may also act on ceramide phosphoethanolamine (CPE), lysophosphatidylcholine (LPC) and lysophosphatidylethanolamine (LPE), but not on lysophosphatidylserine (LPS), and lysophosphatidylglycerol (LPG). It acts by transphosphatidylation, releasing exclusively cyclic phosphate products as second products. Induces dermonecrosis, hemolysis, increased vascular permeability, edema, inflammatory response, and platelet aggregation. This chain is Dermonecrotic toxin LspaSicTox-alphaIA1ii, found in Loxosceles spadicea (Recluse spider).